The following is a 204-amino-acid chain: Cytochrome c biogenesis ATP-binding export protein CcmA (204 aa).

One can recognise an ABC transporter domain in the interval 3-204 (LTVTDLAIAR…PLDDPDGDFL (202 aa)). 35–42 (GPNGAGKT) provides a ligand contact to ATP.

It belongs to the ABC transporter superfamily. CcmA exporter (TC 3.A.1.107) family. As to quaternary structure, the complex is composed of two ATP-binding proteins (CcmA) and two transmembrane proteins (CcmB).

Its subcellular location is the cell membrane. It catalyses the reaction heme b(in) + ATP + H2O = heme b(out) + ADP + phosphate + H(+). Part of the ABC transporter complex CcmAB involved in the biogenesis of c-type cytochromes; once thought to export heme, this seems not to be the case, but its exact role is uncertain. Responsible for energy coupling to the transport system. This Ruegeria pomeroyi (strain ATCC 700808 / DSM 15171 / DSS-3) (Silicibacter pomeroyi) protein is Cytochrome c biogenesis ATP-binding export protein CcmA.